Consider the following 64-residue polypeptide: Lectin-A (64 aa).

Chitin-binding type-1 domains follow at residues 1–20 and 22–45; these read APEC…QVVT and DFDD…NTDA.

Glycosylated.

Functionally, N-acetyl-D-glucosamine binding lectin. Shows low hemagglutinating activity towards human erythrocytes. Has low mitogenic activity towards human peripheral blood lymphocytes. This is Lectin-A from Phytolacca americana (American pokeweed).